The chain runs to 460 residues: WD repeat-containing protein 41 (460 aa).

6 WD repeats span residues 40–79 (EAHRDIVRFLVRLDDFRFASAGDDGIIVVWNAQTGEKLLE), 82–128 (GHTQ…QIQR), 131–168 (CFQSTVKCLTVLQRLDIWLSGGSDLGVWNRKLDLLCKT), 220–258 (DHQDNILSLANINDTGFVTGSHVGELLIWDALDWTVQAC), 321–359 (AHDSNILHIDKLPNRQLISCSEDGAVRMWEVREKQQLAA), and 403–441 (GHSSSVEMFLYFEDHGLVTCSADHLIILWKNGERESGVR).

As to quaternary structure, component of the C9orf72-SMCR8 complex, at least composed of C9orf72, SMCR8 and WDR41. The complex is formed of two protomers, each individually consisting of one molecule each of C9orf72, SMCR8 and WDR41. The protomers homodimerize via an interaction between C9orf72 (via C-terminus) and SMCR8 (via N-terminus). Within each protomer SMCR8 (via DENN domain) acts as a bridging protein between WDR41 (via C-terminus and N-terminus) and C9orf72 (via C-terminus). The C9orf72-SMCR8 complex associates with the ULK1/ATG1 kinase complex.

The protein localises to the cytoplasm. Non-catalytic component of the C9orf72-SMCR8 complex, a complex that has guanine nucleotide exchange factor (GEF) activity and regulates autophagy. The C9orf72-SMCR8 complex promotes the exchange of GDP to GTP, converting inactive GDP-bound RAB8A and RAB39B into their active GTP-bound form, thereby promoting autophagosome maturation. As part of the C9orf72-SMCR8 complex, stimulates RAB8A and RAB11A GTPase activity in vitro, however WDR42 is shown not be an essential complex component for this function. The C9orf72-SMCR8 complex also acts as a negative regulator of autophagy initiation by interacting with the ULK1/ATG1 kinase complex and inhibiting its protein kinase activity. The sequence is that of WD repeat-containing protein 41 from Mus musculus (Mouse).